Consider the following 472-residue polypeptide: MQKLKEIRTRFAPSPTGYLHIGGARTALFSWLYARHHQGKFVLRIEDTDQLRSTEESTRAILDAMTWLGLNWDEGPVFQAERVDIHRAMIRKLVDEDKAYYCTCTPDELEEKRKRALAEGRKPKYDGTCREKKLPPSPGTVVRFRCPQTGITVVDDLIKGKISFNNEELDDLIIQRSDGYPTYNFAVVVDDAQMGISHVIRGDDHVNNTPRQILLYQALGYDIPHFGHVPMILGADKARLSKRHGATSVMAYKDMGYLPEALVNYLVRLGWSHGDQEIFSLDELIALFGLESIGKSAAVFNPEKLLWLNQHYIKTYPEDRLLEVLQPFWKQLGIEAPDPDYGRSIVRDLRARAKTLVDMAESSTFYFNDEPAIDADAAKKFLTPEIAGHLEAIAEALATLGDYSKEGIEIFLRSLVEARAIKLKTIAQPLRIALTGKTVSPGLDDIMLTLGKERVIARIQRTVAYIRSGMAS.

Residues 13 to 23 (PSPTGYLHIGG) carry the 'HIGH' region motif. Residues Cys-102, Cys-104, Cys-129, and Glu-131 each coordinate Zn(2+). Residues 239-243 (RLSKR) carry the 'KMSKS' region motif. Lys-242 serves as a coordination point for ATP.

The protein belongs to the class-I aminoacyl-tRNA synthetase family. Glutamate--tRNA ligase type 1 subfamily. Monomer. It depends on Zn(2+) as a cofactor.

It is found in the cytoplasm. The catalysed reaction is tRNA(Glu) + L-glutamate + ATP = L-glutamyl-tRNA(Glu) + AMP + diphosphate. Catalyzes the attachment of glutamate to tRNA(Glu) in a two-step reaction: glutamate is first activated by ATP to form Glu-AMP and then transferred to the acceptor end of tRNA(Glu). In Syntrophus aciditrophicus (strain SB), this protein is Glutamate--tRNA ligase 1.